A 226-amino-acid chain; its full sequence is Gap junction beta-2 protein (226 aa).

The stretch at 2–13 is an intramembrane region; it reads DWGALQTILGGV. Over 14–20 the chain is Cytoplasmic; sequence NKYSTSI. The chain crosses the membrane as a helical span at residues 21-40; that stretch reads GKIWLTVLFIFRIMILVVAA. Residues 41-73 lie on the Extracellular side of the membrane; it reads KEVWGDEQADFVCNTLQPGCKNVCYDHYFPISH. Positions 42, 45, and 47 each coordinate Ca(2+). Disulfide bonds link cysteine 53–cysteine 180, cysteine 60–cysteine 174, and cysteine 64–cysteine 169. Residues 74–94 form a helical membrane-spanning segment; it reads IRLWALQLIFVSTPALLVAMH. At 95 to 135 the chain is on the cytoplasmic side; sequence VAYRRHEKKRKFIKGEIKNEFKDIEEIKTQKVRIEGSLWWT. Residues 136 to 156 traverse the membrane as a helical segment; sequence YTSSIFFRVVFEAAFMYVFYV. Over 157–189 the chain is Extracellular; the sequence is MYDGFSMQRLVKCNAWPCPNTVDCFVSRPTEKT. A helical transmembrane segment spans residues 190-210; the sequence is VFTVFMIAVSGICILLNVTEL. The Cytoplasmic segment spans residues 211–226; it reads CYLLIRYCSGKSKKPV.

It belongs to the connexin family. Beta-type (group I) subfamily. In terms of assembly, a hemichannel or connexon is composed of a hexamer of connexins. A functional gap junction is formed by the apposition of two hemichannels. Forms heteromeric channels with GJB4. Interacts with CNST.

The protein localises to the cell membrane. The protein resides in the cell junction. It localises to the gap junction. Functionally, structural component of gap junctions. Gap junctions are dodecameric channels that connect the cytoplasm of adjoining cells. They are formed by the docking of two hexameric hemichannels, one from each cell membrane. Small molecules and ions diffuse from one cell to a neighboring cell via the central pore. This chain is Gap junction beta-2 protein (GJB2), found in Macaca mulatta (Rhesus macaque).